We begin with the raw amino-acid sequence, 227 residues long: Isopentenyl-diphosphate Delta-isomerase 1 (227 aa).

Lys-36 serves as a coordination point for substrate. Residues His-40 and His-51 each coordinate Mg(2+). The Nudix hydrolase domain occupies 49–199 (LLHRAFSVFL…EVKLTPWFKI (151 aa)). Substrate is bound by residues Arg-70 and Lys-74. Residue Cys-86 is part of the active site. Residue Ser-87 participates in substrate binding. 2 residues coordinate Mg(2+): Glu-146 and Glu-148. Residue Glu-148 is part of the active site. Lys-176 carries the N6-acetyllysine modification. The Microbody targeting signal signature appears at 225–227 (HRM).

Belongs to the IPP isomerase type 1 family. As to quaternary structure, monomer. Requires Mg(2+) as cofactor.

It localises to the peroxisome. It catalyses the reaction isopentenyl diphosphate = dimethylallyl diphosphate. The protein operates within isoprenoid biosynthesis; dimethylallyl diphosphate biosynthesis; dimethylallyl diphosphate from isopentenyl diphosphate: step 1/1. Its function is as follows. Catalyzes the 1,3-allylic rearrangement of the homoallylic substrate isopentenyl (IPP) to its highly electrophilic allylic isomer, dimethylallyl diphosphate (DMAPP). The polypeptide is Isopentenyl-diphosphate Delta-isomerase 1 (IDI1) (Mesocricetus auratus (Golden hamster)).